Consider the following 295-residue polypeptide: Nitrogenase iron protein (295 aa).

Residue 10–17 (GKGGIGKS) participates in ATP binding. [4Fe-4S] cluster is bound at residue Cys98. Position 101 is an ADP-ribosylarginine; by dinitrogenase reductase ADP-ribosyltransferase (Arg101). Cys133 contributes to the [4Fe-4S] cluster binding site.

Belongs to the NifH/BchL/ChlL family. In terms of assembly, homodimer. It depends on [4Fe-4S] cluster as a cofactor. The reversible ADP-ribosylation of Arg-101 inactivates the nitrogenase reductase and regulates nitrogenase activity.

The catalysed reaction is N2 + 8 reduced [2Fe-2S]-[ferredoxin] + 16 ATP + 16 H2O = H2 + 8 oxidized [2Fe-2S]-[ferredoxin] + 2 NH4(+) + 16 ADP + 16 phosphate + 6 H(+). In terms of biological role, the key enzymatic reactions in nitrogen fixation are catalyzed by the nitrogenase complex, which has 2 components: the iron protein and the molybdenum-iron protein. This Tolumonas auensis (strain DSM 9187 / NBRC 110442 / TA 4) protein is Nitrogenase iron protein.